We begin with the raw amino-acid sequence, 33 residues long: Natriuretic peptide NP2 (33 aa).

A disulfide bridge connects residues Cys-10 and Cys-26.

Expressed by the venom gland.

It localises to the secreted. Snake venom natriuretic peptide that shows an increase in perfusion pressure, urinary flow and glomerular filtration rate. Reduces total and proximal tubular transport of sodium. In the aortic ring assay, causes a relaxant effect in endothelium-intact thoracic aortic rings precontracted with phenylephrine in the presence and absence of isatin, a natriuretic receptor antagonist. This chain is Natriuretic peptide NP2, found in Crotalus durissus cascavella (Northeastern Brazilian rattlesnake).